The primary structure comprises 460 residues: Lysosomal proton-coupled steroid conjugate and bile acid symporter SLC46A3 (460 aa).

Positions 1–25 are cleaved as a signal peptide; the sequence is MKISFIEPAILLNAFAMTLTIPLTA. At 26–73 the chain is on the extracellular side; sequence QYVYRRIWEETGNYTFASNSNGSECDQNKSSSIFAFREEVQKKASLFN. Residues N38, N46, and N53 are each glycosylated (N-linked (GlcNAc...) asparagine). The chain crosses the membrane as a helical span at residues 74–94; it reads LQVEMSALIPGLVSTFMLLAS. Residues 95–111 lie on the Cytoplasmic side of the membrane; that stretch reads SDNHGRKLPMVLSSLGS. The chain crosses the membrane as a helical span at residues 112 to 132; sequence LGTNTWLCMMSYFDLPLQLLI. Over 133–135 the chain is Extracellular; it reads AST. The chain crosses the membrane as a helical span at residues 136–156; sequence FIGALFGNYTTFWGACFAYIV. The Cytoplasmic portion of the chain corresponds to 157–170; the sequence is DQQKEYKHRIIRIA. Residues 171 to 191 traverse the membrane as a helical segment; the sequence is ILDFMLGVVTGLTGLSSGYFI. Over 192 to 195 the chain is Extracellular; sequence RELG. Residues 196 to 216 form a helical membrane-spanning segment; it reads FVWSYFITAMVLIVNLAYILF. Residues 217–257 are Cytoplasmic-facing; sequence FLNDPIKESSSQIVTMSCIESLKDLFYRTYMLFKNGSSKRQ. A helical membrane pass occupies residues 258–278; it reads ALLCLLIFTLVIYFFVIIGIS. Residues 279-301 are Extracellular-facing; the sequence is PIFTLYELGPPLCWNEVYIGYGS. Residues 302–322 form a helical membrane-spanning segment; that stretch reads ALGSVSFLSSFLGIWLFSYCL. Over 323 to 324 the chain is Cytoplasmic; sequence KD. The chain crosses the membrane as a helical span at residues 325-345; sequence IHIAYIGIFTTMVGMTLAAFT. Residues 346-347 are Extracellular-facing; the sequence is RT. A helical transmembrane segment spans residues 348–368; sequence TLMMFLVRIPFIFTIMPLSVL. Topologically, residues 369–381 are cytoplasmic; sequence RSMLSKVVHSTEQ. The chain crosses the membrane as a helical span at residues 382–402; sequence GALFACIAFLETLAGVTSTSA. Residues 403 to 410 are Extracellular-facing; the sequence is YSGIYSAT. Residues 411–431 form a helical membrane-spanning segment; that stretch reads VAWYPGFIFLLSAGLLVLPAI. At 432-460 the chain is on the cytoplasmic side; the sequence is SLCCVKSIGWEEGSYTLLVHEEPSEHTSD. Residues 446–449 carry the Tyrosine-based lysosomal-sorting motif motif; the sequence is YTLL.

The protein belongs to the major facilitator superfamily. SLC46A family. In terms of tissue distribution, expressed in liver, kidney, small intestine and colon.

Its subcellular location is the lysosome membrane. The enzyme catalyses estrone 3-sulfate(out) + n H(+)(out) = estrone 3-sulfate(in) + n H(+)(in). The catalysed reaction is 25-hydroxyvitamin D3 sulfate(out) + n H(+)(out) = 25-hydroxyvitamin D3 sulfate(in) + n H(+)(in). It carries out the reaction cholate(out) + n H(+)(out) = cholate(in) + n H(+)(in). It catalyses the reaction glycocholate(out) + n H(+)(out) = glycocholate(in) + n H(+)(in). The enzyme catalyses taurocholate(out) + n H(+)(out) = taurocholate(in) + n H(+)(in). The catalysed reaction is dehydroepiandrosterone 3-sulfate(out) + n H(+)(out) = dehydroepiandrosterone 3-sulfate(in) + n H(+)(in). It carries out the reaction N-acetyl-D-muramoyl-L-alanyl-D-isoglutamine(out) + n H(+)(out) = N-acetyl-D-muramoyl-L-alanyl-D-isoglutamine(in) + n H(+)(in). It catalyses the reaction 2',3'-cGAMP(out) + n H(+)(out) = 2',3'-cGAMP(in) + n H(+)(in). In terms of biological role, lysosomal proton-coupled steroid conjugate and bile acid transporter. Preferentially recognizes lipophilic steroid conjugates or bile acis as endogenous substrates and seems to mediate escape from lysosomes to the cytoplasm. Modulates hepatic cytosolic copper homeostasis, maybe acting as a lysosomal copper transporter and sequestering copper ions in the lysosome. Delivers pathogen-associated molecular patterns to cytosolic pattern recognition receptors as part of the innate immune response to microbes. Selectively transports bacterial muramyl dipeptide (MDP) into the cytosol for recognition by NOD2, triggering inflammatory responses. Likely acts as a redundant importer of cyclic GMP-AMP dinucleotides (cGAMPs) in monocyte and macrophage cell lineages. The transport mechanism, its electrogenicity and stoichiometry remain to be elucidated. The polypeptide is Lysosomal proton-coupled steroid conjugate and bile acid symporter SLC46A3 (Slc46a3) (Mus musculus (Mouse)).